A 138-amino-acid polypeptide reads, in one-letter code: MAKAKKGFSRSDRVAEQIQRELAELTRKGLKDPRAGWITITAVEVTRDYSHAKVYYTVMVDSTREATQEALDSSAGYLRNELGRAIKMFSMPQLHFVYDDSVERGMHLTSLINQVAREDAEKFGEAAAGEAEGEGKAE.

This sequence belongs to the RbfA family. As to quaternary structure, monomer. Binds 30S ribosomal subunits, but not 50S ribosomal subunits or 70S ribosomes.

It is found in the cytoplasm. In terms of biological role, one of several proteins that assist in the late maturation steps of the functional core of the 30S ribosomal subunit. Associates with free 30S ribosomal subunits (but not with 30S subunits that are part of 70S ribosomes or polysomes). Required for efficient processing of 16S rRNA. May interact with the 5'-terminal helix region of 16S rRNA. In Chromobacterium violaceum (strain ATCC 12472 / DSM 30191 / JCM 1249 / CCUG 213 / NBRC 12614 / NCIMB 9131 / NCTC 9757 / MK), this protein is Ribosome-binding factor A.